A 180-amino-acid polypeptide reads, in one-letter code: Signal peptidase complex subunit 3 (180 aa).

At 1–11 (MNTVLSRANSL) the chain is on the cytoplasmic side. A helical; Signal-anchor for type II membrane protein membrane pass occupies residues 12 to 32 (FAFSLSVMAALTFGCFITTAF). Residues 33-180 (KERSVPVSIA…PDTYETTKSY (148 aa)) are Lumenal-facing. Asn-141 is a glycosylation site (N-linked (GlcNAc...) asparagine).

This sequence belongs to the SPCS3 family. In terms of assembly, component of the signal peptidase complex paralog A (SPC-A) composed of a catalytic subunit SEC11A and three accessory subunits SPCS1, SPCS2 and SPCS3. Component of the signal peptidase complex paralog C (SPC-C) composed of a catalytic subunit SEC11C and three accessory subunits SPCS1, SPCS2 and SPCS3. The complex induces a local thinning of the ER membrane which is used to measure the length of the signal peptide (SP) h-region of protein substrates. This ensures the selectivity of the complex towards h-regions shorter than 18-20 amino acids. As to expression, expressed in hen oviduct (at protein level).

Its subcellular location is the endoplasmic reticulum membrane. Its function is as follows. Essential component of the signal peptidase complex (SPC) which catalyzes the cleavage of N-terminal signal sequences from nascent proteins as they are translocated into the lumen of the endoplasmic reticulum. Essential for the SPC catalytic activity, possibly by stabilizing and positioning the active center of the complex close to the lumenal surface. The protein is Signal peptidase complex subunit 3 of Gallus gallus (Chicken).